The chain runs to 455 residues: Glycylpeptide N-tetradecanoyltransferase (455 aa).

Position 38 to 41 (38 to 41) interacts with tetradecanoyl-CoA; that stretch reads HKFW. A myristoyl CoA-binding region spans residues 168 to 204; sequence INFLCVHKQLRSKRLTPVLIKEITRRVNKCDIWHALY. Residue leucine 455 is the Proton acceptor; via carboxylate of the active site.

The protein belongs to the NMT family. In terms of assembly, monomer. In terms of processing, the N-terminus is blocked.

It is found in the cytoplasm. It catalyses the reaction N-terminal glycyl-[protein] + tetradecanoyl-CoA = N-tetradecanoylglycyl-[protein] + CoA + H(+). With respect to regulation, inhibited by diethylpyrocarbonate. Competitively inhibited by S-(2-oxo)pentadecyl-CoA, a non hydrolysable myristoyl-CoA analog, and by SC-58272, a peptidomimetic derived from the N-terminal sequence of a natural substrate. Functionally, adds a myristoyl group to the N-terminal glycine residue of certain cellular proteins. Substrate specificity requires an N-terminal glycine in the nascent polypeptide substrates. Uncharged amino acids are preferred at position 2 while neutral residues are favored at positions 3 and 4. Ser is present at position 5 in almost all known N-myristoyl proteins and Lys is commonly encountered at postion 6. The chain is Glycylpeptide N-tetradecanoyltransferase (NMT1) from Saccharomyces cerevisiae (strain ATCC 204508 / S288c) (Baker's yeast).